The sequence spans 418 residues: Tyrosine--tRNA ligase (418 aa).

L-tyrosine is bound at residue tyrosine 34. The 'HIGH' region motif lies at 39 to 48 (PTADSLHLGH). 2 residues coordinate L-tyrosine: tyrosine 169 and glutamine 173. Positions 229-233 (KFGKS) match the 'KMSKS' region motif. Lysine 232 contacts ATP. Residues 352–418 (NNIVELLVSS…GKKKYFVLTY (67 aa)) enclose the S4 RNA-binding domain.

The protein belongs to the class-I aminoacyl-tRNA synthetase family. TyrS type 1 subfamily. Homodimer.

It is found in the cytoplasm. It catalyses the reaction tRNA(Tyr) + L-tyrosine + ATP = L-tyrosyl-tRNA(Tyr) + AMP + diphosphate + H(+). In terms of biological role, catalyzes the attachment of tyrosine to tRNA(Tyr) in a two-step reaction: tyrosine is first activated by ATP to form Tyr-AMP and then transferred to the acceptor end of tRNA(Tyr). The protein is Tyrosine--tRNA ligase of Streptococcus pneumoniae serotype 19F (strain G54).